The following is a 758-amino-acid chain: MFKIPGFGKAAANHTPPDMTNMDTRTRHLKVSNCPNNSYALANVAAVSPNDFPNNIYIIIDNLFVFTTRHSNDIPPGTIGFNGNQRTWGGWSLNQDVQAKAFDLFKYSGKQSYLGSIDIDISFRARGKAVSTVFDQDELAKQFVRCYESQIFSPTQYLIMEFQGHFFDLKIRNVQAIDLGDIEPTSAVATGIETKGILTKQTQINFFKGRDGLVNLKSSNSLRPRSNAVIRPDFKFEDLGVGGLDKEFTKIFRRAFASRIFPPSVIEKLGISHVKGLLLYGPPGTGKTLIARKIGTMLNAKEPKIVNGPEILSKYVGSSEENIRNLFKDAEAEYRAKGEESSLHIIIFDELDSVFKQRGSRGDGTGVGDNVVNQLLAKMDGVDQLNNILVIGMTNRKDLIDSALLRPGRFEVQVEIHLPDEKGRLQIFDIQTKKMRENNMMSDDVNLAELAALTKNFSGAEIEGLVKSASSFAINKTVNIGKGATKLNTKDIAKLKVTREDFLNALNDVTPAFGISEEDLKTCVEGGMMLYSERVNSILKNGARYVRQVRESDKSRLVSLLIHGPAGSGKTALAAEIALKSGFPFIRLISPNELSGMSESAKIAYIDNTFRDAYKSPLNILVIDSLETLVDWVPIGPRFSNNILQMLKVALKRKPPQDRRLLIMTTTSAYSVLQQMDILSCFDNEIAVPNMTNLDELNNVMIESNFLDDAGRVKVINELSRSCPNFNVGIKKTLTNIETARHDEDPVNELVELMTQSA.

Residue Ser226 is modified to Phosphoserine. ATP is bound by residues 281–288 (GPPGTGKT) and 564–571 (GPAGSGKT).

It belongs to the AAA ATPase family. Homohexamer. Binds to SEC17.

The protein localises to the cytoplasm. Its function is as follows. Required for vesicle-mediated transport. Catalyzes the fusion of transport vesicles within the Golgi cisternae. Is also required for transport from the endoplasmic reticulum to the Golgi stack. Seems to function as a fusion protein required for the delivery of cargo proteins to all compartments of the Golgi stack independent of vesicle origin. This Saccharomyces cerevisiae (strain ATCC 204508 / S288c) (Baker's yeast) protein is Vesicular-fusion protein SEC18 (SEC18).